The primary structure comprises 303 residues: 2-dehydropantoate 2-reductase (303 aa).

NADP(+) is bound by residues 7-12 (GCGALG), N98, and A122. N98 serves as a coordination point for substrate. K176 acts as the Proton donor in catalysis. N180, N184, N194, and S244 together coordinate substrate. E256 is an NADP(+) binding site.

Belongs to the ketopantoate reductase family. Monomer.

The protein resides in the cytoplasm. The catalysed reaction is (R)-pantoate + NADP(+) = 2-dehydropantoate + NADPH + H(+). Its pathway is cofactor biosynthesis; (R)-pantothenate biosynthesis; (R)-pantoate from 3-methyl-2-oxobutanoate: step 2/2. In terms of biological role, catalyzes the NADPH-dependent reduction of ketopantoate into pantoic acid. This is 2-dehydropantoate 2-reductase (panE) from Salmonella typhi.